A 175-amino-acid polypeptide reads, in one-letter code: MSERIVLDEAAMKRTLMRMAHEILEYNRGTKDLVLLGVKTRGEFLAKSIQSKIQQIENTTVPTGTIDITQFRDDLELPTPKISEKSFVIDVDITDKVVIIIDDVLYTGRTVRASLDAILLHSRPQKIGLAALVDRGHRELPIRADFVGKNIPTARDEAVSVYVKETDGRNAVIIE.

Residues Val98–Thr110 carry the PRPP-binding motif.

Belongs to the purine/pyrimidine phosphoribosyltransferase family. PyrR subfamily. As to quaternary structure, homodimer and homohexamer; in equilibrium.

The catalysed reaction is UMP + diphosphate = 5-phospho-alpha-D-ribose 1-diphosphate + uracil. In terms of biological role, regulates transcriptional attenuation of the pyrimidine nucleotide (pyr) operon by binding in a uridine-dependent manner to specific sites on pyr mRNA. This disrupts an antiterminator hairpin in the RNA and favors formation of a downstream transcription terminator, leading to a reduced expression of downstream genes. Also displays a weak uracil phosphoribosyltransferase activity which is not physiologically significant. This chain is Bifunctional protein PyrR, found in Staphylococcus carnosus (strain TM300).